Here is a 680-residue protein sequence, read N- to C-terminus: Anosmin-1 (680 aa).

Positions 1-24 are cleaved as a signal peptide; that stretch reads MVPGVPGAVLTLCLWLAASSGCLA. Cystine bridges form between cysteine 49–cysteine 83, cysteine 53–cysteine 77, cysteine 86–cysteine 105, cysteine 90–cysteine 101, and cysteine 116–cysteine 120. The N-linked (GlcNAc...) asparagine glycan is linked to asparagine 71. The region spanning 127 to 176 is the WAP domain; it reads LLVKQGDCPAPEKASGFAAACVESCEVDNECSGVKKCCSNGCGHTCQVPK. 4 Fibronectin type-III domains span residues 186–287, 292–400, 425–523, and 550–658; these read PRKE…SKDP, APAN…THAT, PTRP…TPPC, and KPEN…LPPS. N-linked (GlcNAc...) asparagine glycans are attached at residues asparagine 209, asparagine 300, asparagine 470, asparagine 553, and asparagine 564. The tract at residues 642–680 is disordered; that stretch reads EGPATIKTFRTPELPPSSAHRSHLKHRHPHHYKPSPERY. Residues 661 to 674 show a composition bias toward basic residues; sequence HRSHLKHRHPHHYK.

In terms of assembly, interacts with FGFR1; this interaction does not interfere with FGF2-binding to FGFR1. Binds heparin. Heparin may promote or interfere with ANOS1-FGFR1-FGF2 complex formation depending on the sequential order of its binding to the various constituents. For instance, heparin-ANOS1 interaction favors subsequent binding to pre-existing binary FGFR1-FGF2 complex, while heparin-FGF2 complex does not interact with ANOS1-FGFR1. Post-translationally, N-glycosylated. May be proteolytically cleaved at the cell surface and released from the cell surface. Expressed in the cerebellum (at protein level).

It is found in the cell membrane. The protein localises to the secreted. Functionally, has a dual branch-promoting and guidance activity, which may play an important role in the patterning of mitral and tufted cell collaterals to the olfactory cortex. Chemoattractant for fetal olfactory epithelial cells. The protein is Anosmin-1 of Homo sapiens (Human).